A 260-amino-acid chain; its full sequence is Indole-3-glycerol phosphate synthase (260 aa).

Belongs to the TrpC family.

It carries out the reaction 1-(2-carboxyphenylamino)-1-deoxy-D-ribulose 5-phosphate + H(+) = (1S,2R)-1-C-(indol-3-yl)glycerol 3-phosphate + CO2 + H2O. It functions in the pathway amino-acid biosynthesis; L-tryptophan biosynthesis; L-tryptophan from chorismate: step 4/5. The chain is Indole-3-glycerol phosphate synthase from Staphylococcus haemolyticus (strain JCSC1435).